The chain runs to 159 residues: Putative 4-hydroxy-4-methyl-2-oxoglutarate aldolase (159 aa).

Substrate is bound by residues 78–81 (GDVI) and arginine 100. Residue aspartate 101 participates in a divalent metal cation binding.

Belongs to the class II aldolase/RraA-like family. Homotrimer. It depends on a divalent metal cation as a cofactor.

It carries out the reaction 4-hydroxy-4-methyl-2-oxoglutarate = 2 pyruvate. The catalysed reaction is oxaloacetate + H(+) = pyruvate + CO2. Catalyzes the aldol cleavage of 4-hydroxy-4-methyl-2-oxoglutarate (HMG) into 2 molecules of pyruvate. Also contains a secondary oxaloacetate (OAA) decarboxylase activity due to the common pyruvate enolate transition state formed following C-C bond cleavage in the retro-aldol and decarboxylation reactions. In Mycobacterium sp. (strain JLS), this protein is Putative 4-hydroxy-4-methyl-2-oxoglutarate aldolase.